The chain runs to 783 residues: E3 UFM1-protein ligase 1 homolog (783 aa).

Positions 404 to 482 are disordered; the sequence is SNSSANFDAD…AGSSRKSVKP (79 aa). The span at 445-457 shows a compositional bias: basic residues; sequence KSTKKHQRGRAAA.

The protein belongs to the UFL1 family.

In terms of biological role, E3 UFM1-protein ligase that mediates ufmylation of target proteins. The polypeptide is E3 UFM1-protein ligase 1 homolog (Drosophila mojavensis (Fruit fly)).